We begin with the raw amino-acid sequence, 379 residues long: Cinnamyl alcohol dehydrogenase 7 (379 aa).

Low complexity predominate over residues 1 to 13 (MAPTTTATAAAEQ). The disordered stretch occupies residues 1 to 21 (MAPTTTATAAAEQAPPPQHTR). Residue C60 coordinates Zn(2+). S62 contacts NADP(+). 7 residues coordinate Zn(2+): H82, E83, C113, C116, C119, C127, and C185. Residues T189, 210-215 (GLGGLG), 233-238 (STSPVK), T273, G297, and 320-322 (SCM) each bind NADP(+).

It belongs to the zinc-containing alcohol dehydrogenase family. In terms of assembly, homodimer. The cofactor is Zn(2+). Expressed in roots, first internodes and panicles. Expressed in the vascular bundles and sclerenchyma cells below the epidermis in leaves and stems.

It carries out the reaction (E)-cinnamyl alcohol + NADP(+) = (E)-cinnamaldehyde + NADPH + H(+). The enzyme catalyses (E)-coniferol + NADP(+) = (E)-coniferaldehyde + NADPH + H(+). The catalysed reaction is (E)-sinapyl alcohol + NADP(+) = (E)-sinapaldehyde + NADPH + H(+). It catalyses the reaction (E)-4-coumaroyl alcohol + NADP(+) = (E)-4-coumaraldehyde + NADPH + H(+). It carries out the reaction (E)-caffeyl alcohol + NADP(+) = (E)-caffeyl aldehyde + NADPH + H(+). Its pathway is aromatic compound metabolism; phenylpropanoid biosynthesis. In terms of biological role, involved in lignin biosynthesis. May catalyze the final step specific for the production of lignin monomers, like coniferyl alcohol, sinapyl alcohol and 4-coumaryl alcohol. This is Cinnamyl alcohol dehydrogenase 7 from Oryza sativa subsp. japonica (Rice).